The following is an 884-amino-acid chain: Cytosolic carboxypeptidase-like protein 5 (884 aa).

The Peptidase M14 domain occupies 157–570 (YPFSYSDCQD…AMAIAALDMA (414 aa)). Zn(2+) contacts are provided by H252 and E255. 2 disordered regions span residues 343–364 (HPQSPSEHQHSPCLPPDAPLSD) and 376–401 (HLGHTSDGDSPEDWTQTRPAEQKASG). Zn(2+) is bound at residue H434. E516 (proton donor/acceptor) is an active-site residue. 2 disordered regions span residues 603–737 (LSST…HSTG) and 784–859 (QVRP…RICY). Positions 620 to 635 (PPRSNSGLPVSCSENP) are enriched in polar residues. Composition is skewed to low complexity over residues 641-666 (SFSTGTSAGGSSSSQQNSPQMKNSPS) and 714-737 (PTSSSLAPSPNPTSSSPASSHSTG). A Phosphoserine modification is found at S839. Polar residues predominate over residues 846–857 (ISCSLSDSQSRI).

The protein belongs to the peptidase M14 family. It depends on Zn(2+) as a cofactor.

Its subcellular location is the cytoplasm. The protein localises to the cytosol. The protein resides in the nucleus. It is found in the cytoskeleton. It localises to the spindle. Its subcellular location is the midbody. The catalysed reaction is gamma-L-glutamyl-L-glutamyl-[protein] + H2O = L-glutamyl-[protein] + L-glutamate. It catalyses the reaction (L-glutamyl)(n+1)-gamma-L-glutamyl-L-glutamyl-[protein] + H2O = (L-glutamyl)(n)-gamma-L-glutamyl-L-glutamyl-[protein] + L-glutamate. The enzyme catalyses C-terminal L-alpha-aminoacyl-L-glutamyl-[tubulin] + H2O = C-terminal L-alpha-aminoacyl-[tubulin] + L-glutamate. It carries out the reaction C-terminal L-alpha-aminoacyl-L-glutamyl-L-glutamyl-[tubulin] + H2O = C-terminal L-alpha-aminoacyl-L-glutamyl-[tubulin] + L-glutamate. Its function is as follows. Metallocarboxypeptidase that mediates deglutamylation of tubulin and non-tubulin target proteins. Catalyzes the removal of polyglutamate side chains present on the gamma-carboxyl group of glutamate residues within the C-terminal tail of alpha- and beta-tubulin. Cleaves alpha- and gamma-linked polyglutamate tubulin side-chain, as well as the branching point glutamate. Also catalyzes the removal of alpha-linked glutamate residues from the carboxy-terminus of alpha-tubulin. Mediates deglutamylation of nucleotidyltransferase CGAS, leading to CGAS antiviral defense response activation. This chain is Cytosolic carboxypeptidase-like protein 5 (AGBL5), found in Ailuropoda melanoleuca (Giant panda).